Consider the following 232-residue polypeptide: Ubiquinone biosynthesis O-methyltransferase (232 aa).

Residues Arg36, Gly55, Asp76, and Leu120 each contribute to the S-adenosyl-L-methionine site.

The protein belongs to the methyltransferase superfamily. UbiG/COQ3 family.

The enzyme catalyses a 3-demethylubiquinol + S-adenosyl-L-methionine = a ubiquinol + S-adenosyl-L-homocysteine + H(+). It carries out the reaction a 3-(all-trans-polyprenyl)benzene-1,2-diol + S-adenosyl-L-methionine = a 2-methoxy-6-(all-trans-polyprenyl)phenol + S-adenosyl-L-homocysteine + H(+). Its pathway is cofactor biosynthesis; ubiquinone biosynthesis. Its function is as follows. O-methyltransferase that catalyzes the 2 O-methylation steps in the ubiquinone biosynthetic pathway. This chain is Ubiquinone biosynthesis O-methyltransferase, found in Pseudomonas aeruginosa (strain LESB58).